A 133-amino-acid polypeptide reads, in one-letter code: UPF0344 protein SH1980 (133 aa).

A run of 4 helical transmembrane segments spans residues 1–21 (MLHM…IAFL), 42–62 (VFML…FMAA), 71–91 (MLLT…EVSI), and 103–123 (LFWA…ILPW).

It belongs to the UPF0344 family.

It is found in the cell membrane. The protein is UPF0344 protein SH1980 of Staphylococcus haemolyticus (strain JCSC1435).